Here is a 76-residue protein sequence, read N- to C-terminus: Conotoxin VnMEKL-021 (76 aa).

An N-terminal signal peptide occupies residues 1–19 (MQKLTILLLVAAVLMSTQA). A propeptide spanning residues 20-37 (LIKGGGEKRPKEKIKFLS) is cleaved from the precursor. Disulfide bonds link Cys51–Cys65, Cys58–Cys69, and Cys64–Cys73.

It belongs to the conotoxin O2 superfamily. In terms of tissue distribution, expressed by the venom duct.

The protein resides in the secreted. This chain is Conotoxin VnMEKL-021, found in Conus ventricosus (Mediterranean cone).